Here is a 110-residue protein sequence, read N- to C-terminus: MATTAILKNARLSAQKGRLVADQVRGLPVDKALDILGFSPKKASALIRKVLESAIANAEHNDGADIDELRVAAIMVNEGPTIKRIRARARGRASRVFKRSCHIKVMVSED.

This sequence belongs to the universal ribosomal protein uL22 family. As to quaternary structure, part of the 50S ribosomal subunit.

This protein binds specifically to 23S rRNA; its binding is stimulated by other ribosomal proteins, e.g. L4, L17, and L20. It is important during the early stages of 50S assembly. It makes multiple contacts with different domains of the 23S rRNA in the assembled 50S subunit and ribosome. Functionally, the globular domain of the protein is located near the polypeptide exit tunnel on the outside of the subunit, while an extended beta-hairpin is found that lines the wall of the exit tunnel in the center of the 70S ribosome. The sequence is that of Large ribosomal subunit protein uL22 from Nitrosococcus oceani (strain ATCC 19707 / BCRC 17464 / JCM 30415 / NCIMB 11848 / C-107).